The primary structure comprises 368 residues: Quinolinate synthase (368 aa).

Iminosuccinate is bound by residues histidine 46 and serine 63. A [4Fe-4S] cluster-binding site is contributed by cysteine 110. Residues 141 to 143 and serine 162 contribute to the iminosuccinate site; that span reads YVN. Cysteine 230 serves as a coordination point for [4Fe-4S] cluster. Residues 256–258 and threonine 273 contribute to the iminosuccinate site; that span reads HPE. Cysteine 320 serves as a coordination point for [4Fe-4S] cluster.

The protein belongs to the quinolinate synthase family. Type 3 subfamily. Requires [4Fe-4S] cluster as cofactor.

It is found in the cytoplasm. The catalysed reaction is iminosuccinate + dihydroxyacetone phosphate = quinolinate + phosphate + 2 H2O + H(+). It participates in cofactor biosynthesis; NAD(+) biosynthesis; quinolinate from iminoaspartate: step 1/1. Catalyzes the condensation of iminoaspartate with dihydroxyacetone phosphate to form quinolinate. The polypeptide is Quinolinate synthase (Bacillus cereus (strain B4264)).